The following is a 422-amino-acid chain: Phosphoribosylamine--glycine ligase (422 aa).

The region spanning 107-313 (KDLMKKYDIP…LVQVLLDLLD (207 aa)) is the ATP-grasp domain. 133 to 194 (VQEKGAPIVI…EEYLSGEEFS (62 aa)) provides a ligand contact to ATP. Residues glutamate 283 and asparagine 285 each coordinate Mg(2+).

It belongs to the GARS family. Requires Mg(2+) as cofactor. The cofactor is Mn(2+).

The catalysed reaction is 5-phospho-beta-D-ribosylamine + glycine + ATP = N(1)-(5-phospho-beta-D-ribosyl)glycinamide + ADP + phosphate + H(+). It participates in purine metabolism; IMP biosynthesis via de novo pathway; N(1)-(5-phospho-D-ribosyl)glycinamide from 5-phospho-alpha-D-ribose 1-diphosphate: step 2/2. This Bacillus subtilis (strain 168) protein is Phosphoribosylamine--glycine ligase.